The chain runs to 600 residues: Oligopeptide-binding protein OppA (600 aa).

A signal peptide spans 1–22 (MNKLKVTLLASSVVLAATLLSA). Residue Cys23 is the site of N-palmitoyl cysteine attachment. Cys23 carries S-diacylglycerol cysteine lipidation.

The protein belongs to the bacterial solute-binding protein 5 family. In terms of assembly, the complex is composed of two ATP-binding proteins (OppD and OppF), two transmembrane proteins (OppB and OppC) and a solute-binding protein (OppA).

It is found in the cell membrane. Its function is as follows. Part of the ABC transporter complex OppABCDF involved in the uptake of oligopeptides. Essential for uptake of peptides larger than three amino acids and for growth in milk. The sequence is that of Oligopeptide-binding protein OppA from Lactococcus lactis subsp. lactis (Streptococcus lactis).